A 439-amino-acid polypeptide reads, in one-letter code: GTPase Der (439 aa).

2 consecutive EngA-type G domains span residues 4-168 (PIVA…KDDE) and 177-352 (INIA…DNYT). GTP is bound by residues 10 to 17 (GRPNVGKS), 57 to 61 (DTGGI), 120 to 123 (NKID), 183 to 190 (GKPNVGKS), 230 to 234 (DTAGL), and 295 to 298 (NKWD). The KH-like domain maps to 353–437 (KRVKTGVLND…GIKTEFRERK (85 aa)).

The protein belongs to the TRAFAC class TrmE-Era-EngA-EngB-Septin-like GTPase superfamily. EngA (Der) GTPase family. As to quaternary structure, associates with the 50S ribosomal subunit.

GTPase that plays an essential role in the late steps of ribosome biogenesis. The chain is GTPase Der from Clostridium botulinum (strain Loch Maree / Type A3).